The chain runs to 160 residues: 6-hydroxypseudooxynicotine dehydrogenase complex subunit beta (160 aa).

The region spanning 4 to 80 (FRLTVEVNGV…NSRIETVESL (77 aa)) is the 2Fe-2S ferredoxin-type domain. The [2Fe-2S] cluster site is built by C42, C47, C50, C62, C101, C104, C137, and C139.

As to quaternary structure, heterohexamer of 2 alpha (kdhA), 2 beta (kdhB) and 2 gamma (kdhC) subunit. Dimer of heterotrimers. The cofactor is [2Fe-2S] cluster.

It carries out the reaction 6-hydroxypseudooxynicotine + A + H2O = 2,6-dihydroxypseudooxynicotine + AH2. It functions in the pathway alkaloid degradation; nicotine degradation. Functionally, molybdo-flavoprotein enzyme complex involved in nicotine degradation. The subunit gamma (large subunit) contains the substrate-binding sites, the subunit alpha (medium subunit) binds FAD and the subunit beta (small subunit) has a 2Fe-2S ferredoxin-type domain which binds 2 2Fe-2S clusters. This chain is 6-hydroxypseudooxynicotine dehydrogenase complex subunit beta (kdhB), found in Paenarthrobacter nicotinovorans (Arthrobacter nicotinovorans).